Reading from the N-terminus, the 73-residue chain is Translation initiation factor IF-1 (73 aa).

The S1-like domain maps to 1–73 (MAKKDGVIEI…TRGRIVYRYK (73 aa)).

The protein belongs to the IF-1 family. In terms of assembly, component of the 30S ribosomal translation pre-initiation complex which assembles on the 30S ribosome in the order IF-2 and IF-3, IF-1 and N-formylmethionyl-tRNA(fMet); mRNA recruitment can occur at any time during PIC assembly.

The protein localises to the cytoplasm. In terms of biological role, one of the essential components for the initiation of protein synthesis. Stabilizes the binding of IF-2 and IF-3 on the 30S subunit to which N-formylmethionyl-tRNA(fMet) subsequently binds. Helps modulate mRNA selection, yielding the 30S pre-initiation complex (PIC). Upon addition of the 50S ribosomal subunit IF-1, IF-2 and IF-3 are released leaving the mature 70S translation initiation complex. In Paenarthrobacter aurescens (strain TC1), this protein is Translation initiation factor IF-1.